Here is a 150-residue protein sequence, read N- to C-terminus: Protein Smg homolog (150 aa).

Belongs to the Smg family.

In Leptothrix cholodnii (strain ATCC 51168 / LMG 8142 / SP-6) (Leptothrix discophora (strain SP-6)), this protein is Protein Smg homolog.